Reading from the N-terminus, the 448-residue chain is N-succinylarginine dihydrolase (448 aa).

Residues 19 to 28 (GGLSYGNVAS), Asn110, and 137 to 138 (HR) each bind substrate. Glu174 is an active-site residue. A substrate-binding site is contributed by Arg214. Residue His250 is part of the active site. Substrate is bound by residues Asp252 and Asn365. Cys371 acts as the Nucleophile in catalysis.

It belongs to the succinylarginine dihydrolase family. In terms of assembly, homodimer.

It catalyses the reaction N(2)-succinyl-L-arginine + 2 H2O + 2 H(+) = N(2)-succinyl-L-ornithine + 2 NH4(+) + CO2. The protein operates within amino-acid degradation; L-arginine degradation via AST pathway; L-glutamate and succinate from L-arginine: step 2/5. In terms of biological role, catalyzes the hydrolysis of N(2)-succinylarginine into N(2)-succinylornithine, ammonia and CO(2). This chain is N-succinylarginine dihydrolase, found in Pseudomonas syringae pv. tomato (strain ATCC BAA-871 / DC3000).